A 159-amino-acid polypeptide reads, in one-letter code: Antitoxin Xre (159 aa).

This sequence belongs to the MbcA/ParS/Xre antitoxin family. In terms of assembly, homodimer. Forms a complex with cognate toxin Res; the 2 toxin molecules dimerize and each contacts an Xre homodimer. Most Res-Xre contacts are between the antitoxin molecule closest to the toxin.

In terms of biological role, probable antitoxin component of a type II toxin-antitoxin (TA) system. In vivo probably neutralizes the toxic effect of cognate toxin Res. This chain is Antitoxin Xre, found in Pseudomonas putida (strain ATCC 47054 / DSM 6125 / CFBP 8728 / NCIMB 11950 / KT2440).